Consider the following 193-residue polypeptide: dTTP/UTP pyrophosphatase (193 aa).

Asp77 (proton acceptor) is an active-site residue.

Belongs to the Maf family. YhdE subfamily. A divalent metal cation serves as cofactor.

It is found in the cytoplasm. The catalysed reaction is dTTP + H2O = dTMP + diphosphate + H(+). It carries out the reaction UTP + H2O = UMP + diphosphate + H(+). In terms of biological role, nucleoside triphosphate pyrophosphatase that hydrolyzes dTTP and UTP. May have a dual role in cell division arrest and in preventing the incorporation of modified nucleotides into cellular nucleic acids. The polypeptide is dTTP/UTP pyrophosphatase (Bacteroides fragilis (strain YCH46)).